Here is a 118-residue protein sequence, read N- to C-terminus: Large ribosomal subunit protein bL19 (118 aa).

It belongs to the bacterial ribosomal protein bL19 family.

In terms of biological role, this protein is located at the 30S-50S ribosomal subunit interface and may play a role in the structure and function of the aminoacyl-tRNA binding site. This is Large ribosomal subunit protein bL19 from Helicobacter pylori (strain G27).